We begin with the raw amino-acid sequence, 223 residues long: 2-C-methyl-D-erythritol 4-phosphate cytidylyltransferase (223 aa).

Belongs to the IspD/TarI cytidylyltransferase family. IspD subfamily.

The catalysed reaction is 2-C-methyl-D-erythritol 4-phosphate + CTP + H(+) = 4-CDP-2-C-methyl-D-erythritol + diphosphate. It participates in isoprenoid biosynthesis; isopentenyl diphosphate biosynthesis via DXP pathway; isopentenyl diphosphate from 1-deoxy-D-xylulose 5-phosphate: step 2/6. Functionally, catalyzes the formation of 4-diphosphocytidyl-2-C-methyl-D-erythritol from CTP and 2-C-methyl-D-erythritol 4-phosphate (MEP). This is 2-C-methyl-D-erythritol 4-phosphate cytidylyltransferase from Prochlorococcus marinus (strain AS9601).